A 210-amino-acid polypeptide reads, in one-letter code: Cell division protein SepF (210 aa).

Belongs to the SepF family. As to quaternary structure, homodimer. Interacts with FtsZ.

It is found in the cytoplasm. Its function is as follows. Cell division protein that is part of the divisome complex and is recruited early to the Z-ring. Probably stimulates Z-ring formation, perhaps through the cross-linking of FtsZ protofilaments. Its function overlaps with FtsA. The sequence is that of Cell division protein SepF from Mycobacterium leprae (strain Br4923).